Consider the following 432-residue polypeptide: Adenylosuccinate synthetase (432 aa).

GTP-binding positions include Gly-11–Lys-17 and Gly-39–Thr-41. Residue Asp-12 is the Proton acceptor of the active site. 2 residues coordinate Mg(2+): Asp-12 and Gly-39. IMP-binding positions include Asp-12–Lys-15, Asn-37–His-40, Thr-134, Arg-148, Asn-230, Thr-245, and Arg-309. Residue His-40 is the Proton donor of the active site. Substrate is bound at residue Val-305–Arg-311. GTP-binding positions include Arg-311, Lys-337–Asp-339, and Gly-419–Gly-421.

Belongs to the adenylosuccinate synthetase family. As to quaternary structure, homodimer. Requires Mg(2+) as cofactor.

It localises to the cytoplasm. The catalysed reaction is IMP + L-aspartate + GTP = N(6)-(1,2-dicarboxyethyl)-AMP + GDP + phosphate + 2 H(+). It participates in purine metabolism; AMP biosynthesis via de novo pathway; AMP from IMP: step 1/2. Its function is as follows. Plays an important role in the de novo pathway and in the salvage pathway of purine nucleotide biosynthesis. Catalyzes the first committed step in the biosynthesis of AMP from IMP. The chain is Adenylosuccinate synthetase from Candida glabrata (strain ATCC 2001 / BCRC 20586 / JCM 3761 / NBRC 0622 / NRRL Y-65 / CBS 138) (Yeast).